We begin with the raw amino-acid sequence, 340 residues long: Ketol-acid reductoisomerase (NADP(+)) (340 aa).

One can recognise a KARI N-terminal Rossmann domain in the interval 1–182; sequence MRVYYDRDCD…GGGRSGIIET (182 aa). NADP(+) contacts are provided by residues 24 to 27, R48, S51, S53, and 83 to 86; these read YGSQ and DELQ. H108 is a catalytic residue. Residue G134 coordinates NADP(+). The KARI C-terminal knotted domain occupies 183–329; sequence NFRQECETDL…EKLRGMMPWI (147 aa). D191, E195, E227, and E231 together coordinate Mg(2+). Residue S252 participates in substrate binding.

Belongs to the ketol-acid reductoisomerase family. Mg(2+) serves as cofactor.

It catalyses the reaction (2R)-2,3-dihydroxy-3-methylbutanoate + NADP(+) = (2S)-2-acetolactate + NADPH + H(+). The enzyme catalyses (2R,3R)-2,3-dihydroxy-3-methylpentanoate + NADP(+) = (S)-2-ethyl-2-hydroxy-3-oxobutanoate + NADPH + H(+). It participates in amino-acid biosynthesis; L-isoleucine biosynthesis; L-isoleucine from 2-oxobutanoate: step 2/4. Its pathway is amino-acid biosynthesis; L-valine biosynthesis; L-valine from pyruvate: step 2/4. Functionally, involved in the biosynthesis of branched-chain amino acids (BCAA). Catalyzes an alkyl-migration followed by a ketol-acid reduction of (S)-2-acetolactate (S2AL) to yield (R)-2,3-dihydroxy-isovalerate. In the isomerase reaction, S2AL is rearranged via a Mg-dependent methyl migration to produce 3-hydroxy-3-methyl-2-ketobutyrate (HMKB). In the reductase reaction, this 2-ketoacid undergoes a metal-dependent reduction by NADPH to yield (R)-2,3-dihydroxy-isovalerate. The sequence is that of Ketol-acid reductoisomerase (NADP(+)) from Cereibacter sphaeroides (strain ATCC 17029 / ATH 2.4.9) (Rhodobacter sphaeroides).